A 706-amino-acid polypeptide reads, in one-letter code: Polyribonucleotide nucleotidyltransferase (706 aa).

2 residues coordinate Mg(2+): aspartate 485 and aspartate 491. The 60-residue stretch at 552 to 611 (PRMLKMKIHPDKIREVIGSGGKTINKIIEDTGVKIDIENDGTIFIAAQTQEAGELALSII) folds into the KH domain. Residues 621–689 (GDIFKGKVIK…QQGKVSLSRK (69 aa)) enclose the S1 motif domain.

The protein belongs to the polyribonucleotide nucleotidyltransferase family. It depends on Mg(2+) as a cofactor.

It localises to the cytoplasm. It catalyses the reaction RNA(n+1) + phosphate = RNA(n) + a ribonucleoside 5'-diphosphate. Its function is as follows. Involved in mRNA degradation. Catalyzes the phosphorolysis of single-stranded polyribonucleotides processively in the 3'- to 5'-direction. This Alkaliphilus oremlandii (strain OhILAs) (Clostridium oremlandii (strain OhILAs)) protein is Polyribonucleotide nucleotidyltransferase.